Consider the following 606-residue polypeptide: UPF0329 protein ECU06_0090 (606 aa).

Positions 317 to 401 (KKEEERREEE…SREACSKERN (85 aa)) are disordered. Residues 328 to 353 (EKKRKEEVVQRNVEELLRGEEEEKKG) are compositionally biased toward basic and acidic residues. Basic residues predominate over residues 354-367 (AKAKRKSKKKKKGS). A compositionally biased stretch (basic and acidic residues) spans 381–401 (SENREAQEMEDSREACSKERN).

The protein belongs to the UPF0329 family.

The sequence is that of UPF0329 protein ECU06_0090 from Encephalitozoon cuniculi (strain GB-M1) (Microsporidian parasite).